Consider the following 874-residue polypeptide: Pentatricopeptide repeat-containing protein At2g17140 (874 aa).

19 PPR repeats span residues S111–P145, Q146–P180, N181–P215, N216–P250, D251–G285, N290–N320, S325–P359, S360–P394, D395–P429, N430–L464, D465–A499, D523–P557, D558–K592, S593–P627, N628–P662, N663–I693, K697–L731, G732–F766, and D767–M797.

The protein belongs to the PPR family. P subfamily.

The chain is Pentatricopeptide repeat-containing protein At2g17140 from Arabidopsis thaliana (Mouse-ear cress).